We begin with the raw amino-acid sequence, 439 residues long: Exodeoxyribonuclease 7 large subunit (439 aa).

It belongs to the XseA family. Heterooligomer composed of large and small subunits.

The protein resides in the cytoplasm. It carries out the reaction Exonucleolytic cleavage in either 5'- to 3'- or 3'- to 5'-direction to yield nucleoside 5'-phosphates.. Bidirectionally degrades single-stranded DNA into large acid-insoluble oligonucleotides, which are then degraded further into small acid-soluble oligonucleotides. The sequence is that of Exodeoxyribonuclease 7 large subunit from Haemophilus influenzae (strain ATCC 51907 / DSM 11121 / KW20 / Rd).